A 97-amino-acid polypeptide reads, in one-letter code: Citrate lyase acyl carrier protein (97 aa).

S14 carries the O-(phosphoribosyl dephospho-coenzyme A)serine modification.

Belongs to the CitD family. In terms of assembly, oligomer with a subunit composition of (alpha,beta,gamma)6.

The protein localises to the cytoplasm. Functionally, covalent carrier of the coenzyme of citrate lyase. The chain is Citrate lyase acyl carrier protein from Cronobacter sakazakii (strain ATCC BAA-894) (Enterobacter sakazakii).